The sequence spans 276 residues: BES1/BZR1 homolog protein 1 (276 aa).

Disordered regions lie at residues 1-30, 76-125, and 155-191; these read MTASGGGSTAATGRMPTWKERENNKKRERR, TTYR…PTRF, and SAPVTPPISSPRRSNPRLPRWQSSNFPVSAPSSPTRR. The required for DNA-binding stretch occupies residues 14 to 87; the sequence is RMPTWKEREN…YRKGSRPTET (74 aa). The span at 84–103 shows a compositional bias: polar residues; sequence PTETTVPCSSIQLSPQSSAF. Low complexity predominate over residues 104–122; sequence QSPIPSYQASPSSSSYPSP. The residue at position 159 (Thr159) is a Phosphothreonine. Residues 164–174 show a composition bias toward low complexity; sequence SPRRSNPRLPR. Over residues 175-189 the composition is skewed to polar residues; sequence WQSSNFPVSAPSSPT.

This sequence belongs to the BZR/LAT61 family. In terms of processing, phosphorylated. Phosphorylation increases protein degradation.

The chain is BES1/BZR1 homolog protein 1 (BEH1) from Arabidopsis thaliana (Mouse-ear cress).